Here is a 565-residue protein sequence, read N- to C-terminus: Sulfite reductase [NADPH] hemoprotein beta-component (565 aa).

The [4Fe-4S] cluster site is built by Cys429, Cys435, Cys474, and Cys478. Siroheme is bound at residue Cys478.

This sequence belongs to the nitrite and sulfite reductase 4Fe-4S domain family. As to quaternary structure, alpha(8)-beta(8). The alpha component is a flavoprotein, the beta component is a hemoprotein. The cofactor is siroheme. [4Fe-4S] cluster serves as cofactor.

It catalyses the reaction hydrogen sulfide + 3 NADP(+) + 3 H2O = sulfite + 3 NADPH + 4 H(+). It participates in sulfur metabolism; hydrogen sulfide biosynthesis; hydrogen sulfide from sulfite (NADPH route): step 1/1. Component of the sulfite reductase complex that catalyzes the 6-electron reduction of sulfite to sulfide. This is one of several activities required for the biosynthesis of L-cysteine from sulfate. The sequence is that of Sulfite reductase [NADPH] hemoprotein beta-component from Shewanella sp. (strain MR-7).